The primary structure comprises 268 residues: Tryptophan synthase alpha chain (268 aa).

Catalysis depends on proton acceptor residues Glu49 and Asp60.

It belongs to the TrpA family. Tetramer of two alpha and two beta chains.

It carries out the reaction (1S,2R)-1-C-(indol-3-yl)glycerol 3-phosphate + L-serine = D-glyceraldehyde 3-phosphate + L-tryptophan + H2O. It participates in amino-acid biosynthesis; L-tryptophan biosynthesis; L-tryptophan from chorismate: step 5/5. The alpha subunit is responsible for the aldol cleavage of indoleglycerol phosphate to indole and glyceraldehyde 3-phosphate. The polypeptide is Tryptophan synthase alpha chain (Pseudomonas paraeruginosa (strain DSM 24068 / PA7) (Pseudomonas aeruginosa (strain PA7))).